We begin with the raw amino-acid sequence, 278 residues long: Small ribosomal subunit protein uS3 (278 aa).

The 69-residue stretch at 39–107 (VRDFLKKRLA…PVHVNIEEVR (69 aa)) folds into the KH type-2 domain. Residues 217 to 278 (VENENEARRG…DAAAVEKEVS (62 aa)) form a disordered region. The segment covering 230–239 (PRNDAGDNRG) has biased composition (basic and acidic residues).

It belongs to the universal ribosomal protein uS3 family. In terms of assembly, part of the 30S ribosomal subunit. Forms a tight complex with proteins S10 and S14.

Its function is as follows. Binds the lower part of the 30S subunit head. Binds mRNA in the 70S ribosome, positioning it for translation. This chain is Small ribosomal subunit protein uS3, found in Aromatoleum aromaticum (strain DSM 19018 / LMG 30748 / EbN1) (Azoarcus sp. (strain EbN1)).